A 183-amino-acid polypeptide reads, in one-letter code: Translation initiation factor IF-3 (183 aa).

The protein belongs to the IF-3 family. Monomer.

The protein resides in the cytoplasm. Its function is as follows. IF-3 binds to the 30S ribosomal subunit and shifts the equilibrium between 70S ribosomes and their 50S and 30S subunits in favor of the free subunits, thus enhancing the availability of 30S subunits on which protein synthesis initiation begins. The chain is Translation initiation factor IF-3 from Aliivibrio salmonicida (strain LFI1238) (Vibrio salmonicida (strain LFI1238)).